We begin with the raw amino-acid sequence, 137 residues long: Seminal plasma sperm motility inhibitor (137 aa).

The signal sequence occupies residues 1 to 21 (MKLGSAIPWALLLSTXTLVST). Cys-30 and Cys-51 are joined by a disulfide. In terms of domain architecture, CUB spans 30-131 (CGGFLKNYSG…SSFNVYFYGI (102 aa)). A glycan (N-linked (GlcNAc...) asparagine) is linked at Asn-36.

It belongs to the spermadhesin family. Seminal plasma or sperm.

It localises to the secreted. Inhibitor of sperm motility. In Sus scrofa (Pig), this protein is Seminal plasma sperm motility inhibitor (SPMI).